A 313-amino-acid chain; its full sequence is Uracil-DNA glycosylase (313 aa).

The tract at residues 35-68 (DEPMPKKCRRPAGPPKGFISTRGDTSPSSDNNHI) is disordered. Over residues 56-68 (RGDTSPSSDNNHI) the composition is skewed to polar residues. Aspartate 153 (proton acceptor) is an active-site residue.

The protein belongs to the uracil-DNA glycosylase (UDG) superfamily. UNG family.

The protein localises to the host nucleus. The catalysed reaction is Hydrolyzes single-stranded DNA or mismatched double-stranded DNA and polynucleotides, releasing free uracil.. Functionally, excises uracil residues from the DNA which can arise as a result of misincorporation of dUMP residues by DNA polymerase or deamination of cytosines. Therefore may reduce deleterious uracil incorporation into the viral genome, particularly in terminally differentiated cells which lack DNA repair enzymes. This Gallus gallus (Chicken) protein is Uracil-DNA glycosylase (MDV014).